The chain runs to 304 residues: Acetylglutamate kinase (304 aa).

Substrate contacts are provided by residues glycine 75 to glycine 76, arginine 97, and asparagine 202.

Belongs to the acetylglutamate kinase family. ArgB subfamily.

Its subcellular location is the cytoplasm. It carries out the reaction N-acetyl-L-glutamate + ATP = N-acetyl-L-glutamyl 5-phosphate + ADP. It participates in amino-acid biosynthesis; L-arginine biosynthesis; N(2)-acetyl-L-ornithine from L-glutamate: step 2/4. Catalyzes the ATP-dependent phosphorylation of N-acetyl-L-glutamate. The protein is Acetylglutamate kinase of Parvibaculum lavamentivorans (strain DS-1 / DSM 13023 / NCIMB 13966).